We begin with the raw amino-acid sequence, 667 residues long: Beta-galactosidase LacZ (667 aa).

Position 109 (R109) interacts with substrate. Residue C113 coordinates Zn(2+). N147 contributes to the substrate binding site. E148 functions as the Proton donor in the catalytic mechanism. The Zn(2+) site is built by C153, C155, and C158. Catalysis depends on E307, which acts as the Nucleophile. Substrate-binding positions include W315 and 355–358; that span reads EKFH.

This sequence belongs to the glycosyl hydrolase 42 family.

The catalysed reaction is Hydrolysis of terminal non-reducing beta-D-galactose residues in beta-D-galactosides.. Functionally, catalyzes the hydrolysis of lactose to its constituent monosaccharides glucose and galactose. The chain is Beta-galactosidase LacZ from Lactobacillus acidophilus (strain ATCC 700396 / NCK56 / N2 / NCFM).